A 511-amino-acid chain; its full sequence is uncharacterized protein (511 aa).

The 253-residue stretch at 2-254 (LMDYEKERTE…NFQEKAPIHE (253 aa)) folds into the CoA carboxyltransferase N-terminal domain. Residues 2 to 506 (LMDYEKERTE…KEMTFTNRKH (505 aa)) form a carboxyltransferase region. A CoA carboxyltransferase C-terminal domain is found at 260–506 (HFETPLADVI…KEMTFTNRKH (247 aa)).

It belongs to the AccD/PCCB family.

This is an uncharacterized protein from Bacillus subtilis (strain 168).